Consider the following 364-residue polypeptide: Anthranilate N-methyltransferase (364 aa).

Residues 1–20 (MGSLSESHTQYKHGVEVEED) form a disordered region. Glycine 209, aspartate 232, methionine 253, and lysine 266 together coordinate S-adenosyl-L-methionine. Histidine 270 functions as the Proton acceptor in the catalytic mechanism.

This sequence belongs to the class I-like SAM-binding methyltransferase superfamily. Cation-independent O-methyltransferase family. COMT subfamily. Homodimer. As to expression, expressed in leaves, flowers, stems and roots. Detected in the vascular tissues in stems, in the rhizodermis or the endodermis of roots, in the inside of carpels, in the central vascular bundles of the syncarp ovary and in the secretory oil glands located around the outer ovary wall.

The enzyme catalyses anthranilate + S-adenosyl-L-methionine = N-methylanthranilate + S-adenosyl-L-homocysteine + H(+). Its activity is regulated as follows. Inhibited by Ca(2+), Co(2+), Fe(2+), Fe(3+), Cu(2+) or Zn(2+). No effect of Mg(2+). Its function is as follows. Involved in the biosynthesis of acridine alkaloids. N-methyltransferase with a strict substrate specificity for anthranilate. No activity with anthranilic acid methyl ester, anthraniloyl CoA, 3- or 4-amino-benzoic acid, salicylic acid, catechol, eugenol, caffeic acid, quercetin, theobromin, theophyllin, putrescine and nicotinic acid among others. The sequence is that of Anthranilate N-methyltransferase from Ruta graveolens (Common rue).